The primary structure comprises 200 residues: MYAYIKGTLSQLFPTHVVVETCGIGYEIQTPNSYRFQKYLEKEVQIYTSLIVREDAQLLYGFINEEEKEMFLSLIKVTGIGPKSALAILASSTPHEVKLAIENENDAYLTQFPGIGKKTARQIVLDLKGKVTITEENSDDLLQTQVNGNEQNQIISEALLALQALGYSKRELTKVEKSLNKHNVNSVDEAVKIGLQTLVS.

Residues Met-1–Ile-63 are domain I. The domain II stretch occupies residues Asn-64 to Leu-142. The flexible linker stretch occupies residues Gln-143–Asn-149. Residues Glu-150–Ser-200 are domain III.

The protein belongs to the RuvA family. Homotetramer. Forms an RuvA(8)-RuvB(12)-Holliday junction (HJ) complex. HJ DNA is sandwiched between 2 RuvA tetramers; dsDNA enters through RuvA and exits via RuvB. An RuvB hexamer assembles on each DNA strand where it exits the tetramer. Each RuvB hexamer is contacted by two RuvA subunits (via domain III) on 2 adjacent RuvB subunits; this complex drives branch migration. In the full resolvosome a probable DNA-RuvA(4)-RuvB(12)-RuvC(2) complex forms which resolves the HJ.

It localises to the cytoplasm. Functionally, the RuvA-RuvB-RuvC complex processes Holliday junction (HJ) DNA during genetic recombination and DNA repair, while the RuvA-RuvB complex plays an important role in the rescue of blocked DNA replication forks via replication fork reversal (RFR). RuvA specifically binds to HJ cruciform DNA, conferring on it an open structure. The RuvB hexamer acts as an ATP-dependent pump, pulling dsDNA into and through the RuvAB complex. HJ branch migration allows RuvC to scan DNA until it finds its consensus sequence, where it cleaves and resolves the cruciform DNA. The chain is Holliday junction branch migration complex subunit RuvA from Staphylococcus epidermidis (strain ATCC 35984 / DSM 28319 / BCRC 17069 / CCUG 31568 / BM 3577 / RP62A).